A 231-amino-acid polypeptide reads, in one-letter code: Chromosome partition protein MukE (231 aa).

Residues 211–231 (SLLADEEEQDYNEQAELEGEA) form a disordered region. The span at 214-231 (ADEEEQDYNEQAELEGEA) shows a compositional bias: acidic residues.

The protein belongs to the MukE family. In terms of assembly, interacts, and probably forms a ternary complex, with MukF and MukB. The complex formation is stimulated by calcium or magnesium.

The protein resides in the cytoplasm. Its subcellular location is the nucleoid. In terms of biological role, involved in chromosome condensation, segregation and cell cycle progression. May participate in facilitating chromosome segregation by condensation DNA from both sides of a centrally located replisome during cell division. Probably acts via its interaction with MukB and MukF. The protein is Chromosome partition protein MukE of Vibrio vulnificus (strain CMCP6).